We begin with the raw amino-acid sequence, 601 residues long: 4-hydroxy-3-methylbut-2-en-1-yl diphosphate synthase (flavodoxin) (601 aa).

4 residues coordinate [4Fe-4S] cluster: Cys-507, Cys-510, Cys-542, and Glu-549.

It belongs to the IspG family. [4Fe-4S] cluster is required as a cofactor.

It catalyses the reaction (2E)-4-hydroxy-3-methylbut-2-enyl diphosphate + oxidized [flavodoxin] + H2O + 2 H(+) = 2-C-methyl-D-erythritol 2,4-cyclic diphosphate + reduced [flavodoxin]. The protein operates within isoprenoid biosynthesis; isopentenyl diphosphate biosynthesis via DXP pathway; isopentenyl diphosphate from 1-deoxy-D-xylulose 5-phosphate: step 5/6. In terms of biological role, converts 2C-methyl-D-erythritol 2,4-cyclodiphosphate (ME-2,4cPP) into 1-hydroxy-2-methyl-2-(E)-butenyl 4-diphosphate. This chain is 4-hydroxy-3-methylbut-2-en-1-yl diphosphate synthase (flavodoxin), found in Chlamydia muridarum (strain MoPn / Nigg).